Reading from the N-terminus, the 183-residue chain is MPVEKTLLILKPDAVARGLVGEIISRFEKAGLKIVALKMVKASPEEIERFYPSSEEWLRSAGQKLLKAYQELGIDPRAKIGTDDPVEVGRIIKRSLVKYMTSGPIVVMVLKGNRAVEIVRKLVGPTSPHSAPPGTIRGDYSIDSPDLAAEEGRVVFNLVHASDSPSEAEREIRFWFREEEVLE.

Lysine 11 serves as a coordination point for ATP. Positions 56 to 88 are insert; it reads EWLRSAGQKLLKAYQELGIDPRAKIGTDDPVEV. Residues arginine 120, threonine 126, arginine 137, and asparagine 157 each coordinate ATP. Catalysis depends on histidine 160, which acts as the Pros-phosphohistidine intermediate.

It belongs to the NDK family. Requires Mg(2+) as cofactor.

The protein resides in the cytoplasm. It catalyses the reaction a 2'-deoxyribonucleoside 5'-diphosphate + ATP = a 2'-deoxyribonucleoside 5'-triphosphate + ADP. It carries out the reaction a ribonucleoside 5'-diphosphate + ATP = a ribonucleoside 5'-triphosphate + ADP. In terms of biological role, major role in the synthesis of nucleoside triphosphates other than ATP. The ATP gamma phosphate is transferred to the NDP beta phosphate via a ping-pong mechanism, using a phosphorylated active-site intermediate. The protein is Nucleoside diphosphate kinase (ndk) of Pyrobaculum aerophilum (strain ATCC 51768 / DSM 7523 / JCM 9630 / CIP 104966 / NBRC 100827 / IM2).